Reading from the N-terminus, the 93-residue chain is Islet amyloid polypeptide (93 aa).

An N-terminal signal peptide occupies residues 1-23 (MMCISKLPAVLLILSVALNHLRA). The propeptide occupies 24–35 (TPVRSGSNPQMD). Cys39 and Cys44 are joined by a disulfide. Residues 64–93 (LPPTNVGSNTYGKRNAAGDPNRESLDFLLV) are disordered. Tyr74 is modified (tyrosine amide). Positions 78-93 (NAAGDPNRESLDFLLV) are excised as a propeptide. Residues 83 to 93 (PNRESLDFLLV) show a composition bias toward basic and acidic residues.

The protein belongs to the calcitonin family. As to quaternary structure, can form homodimers. Interacts with IDE and INS. Interaction with INS inhibits homodimerization and fibril formation.

The protein localises to the secreted. Amylin/IAPP is a glucoregulatory peptide hormone that plays an important role in the regulation of energy homeostasis. Selectively inhibits insulin-stimulated glucose utilization and glycogen deposition in muscle, while not affecting adipocyte glucose metabolism. IAPP function is mediated by the CALCR-RAMPs (AMYRs) receptor complexes. Amylin can also bind CALCR receptor in the absence of RAMPs, although it is more selective for AMYRs. This chain is Islet amyloid polypeptide, found in Mus musculus (Mouse).